We begin with the raw amino-acid sequence, 205 residues long: NADH-quinone oxidoreductase subunit J (205 aa).

5 helical membrane-spanning segments follow: residues 1-21 (MPIF…CVVL), 26-46 (VYSV…MILL), 54-74 (MLIV…IMML), 89-109 (LALS…IILL), and 142-162 (FMLP…ACIT).

It belongs to the complex I subunit 6 family.

Its subcellular location is the cell membrane. It catalyses the reaction a quinone + NADH + 5 H(+)(in) = a quinol + NAD(+) + 4 H(+)(out). In terms of biological role, NDH-1 shuttles electrons from NADH, via FMN and iron-sulfur (Fe-S) centers, to quinones in the respiratory chain. Couples the redox reaction to proton translocation (for every two electrons transferred, four hydrogen ions are translocated across the cytoplasmic membrane), and thus conserves the redox energy in a proton gradient. In Rickettsia conorii (strain ATCC VR-613 / Malish 7), this protein is NADH-quinone oxidoreductase subunit J (nuoJ).